Here is a 132-residue protein sequence, read N- to C-terminus: Small ribosomal subunit protein uS8 (132 aa).

This sequence belongs to the universal ribosomal protein uS8 family. Part of the 30S ribosomal subunit. Contacts proteins S5 and S12.

One of the primary rRNA binding proteins, it binds directly to 16S rRNA central domain where it helps coordinate assembly of the platform of the 30S subunit. This is Small ribosomal subunit protein uS8 from Ehrlichia ruminantium (strain Welgevonden).